Consider the following 130-residue polypeptide: MMQDPISDMLTRIRNAQAVRKKEVVMPRSKLKMSIANVLKEEGYIVDYREEGDLTKAQLVITLKYHEGESVISEIRRVSSPALQVYKSKDELPKVKNGLGIAIISTSKGVMSDRQARRLGEGGEVLCYVS.

Belongs to the universal ribosomal protein uS8 family. Part of the 30S ribosomal subunit. Contacts proteins S5 and S12.

Its function is as follows. One of the primary rRNA binding proteins, it binds directly to 16S rRNA central domain where it helps coordinate assembly of the platform of the 30S subunit. In Coxiella burnetii (strain RSA 331 / Henzerling II), this protein is Small ribosomal subunit protein uS8.